We begin with the raw amino-acid sequence, 155 residues long: Ribosome maturation factor RimP (155 aa).

It belongs to the RimP family.

Its subcellular location is the cytoplasm. In terms of biological role, required for maturation of 30S ribosomal subunits. In Staphylococcus saprophyticus subsp. saprophyticus (strain ATCC 15305 / DSM 20229 / NCIMB 8711 / NCTC 7292 / S-41), this protein is Ribosome maturation factor RimP.